Reading from the N-terminus, the 524-residue chain is Peptide chain release factor 3 (524 aa).

The 269-residue stretch at 8 to 276 folds into the tr-type G domain; it reads NKRRTFAIIS…GFAKYAPAPE (269 aa). GTP-binding positions include 17 to 24, 85 to 89, and 139 to 142; these read SHPDAGKT, DTPGH, and NKLD.

This sequence belongs to the TRAFAC class translation factor GTPase superfamily. Classic translation factor GTPase family. PrfC subfamily.

It is found in the cytoplasm. In terms of biological role, increases the formation of ribosomal termination complexes and stimulates activities of RF-1 and RF-2. It binds guanine nucleotides and has strong preference for UGA stop codons. It may interact directly with the ribosome. The stimulation of RF-1 and RF-2 is significantly reduced by GTP and GDP, but not by GMP. The protein is Peptide chain release factor 3 of Hydrogenovibrio crunogenus (strain DSM 25203 / XCL-2) (Thiomicrospira crunogena).